We begin with the raw amino-acid sequence, 247 residues long: Uridylate kinase (247 aa).

17-20 contributes to the ATP binding site; it reads KFSG. Residue G59 participates in UMP binding. Residues G60 and R64 each coordinate ATP. Residues D79 and 140–147 contribute to the UMP site; that span reads TGNPFFTT. Positions 167, 173, and 176 each coordinate ATP.

Belongs to the UMP kinase family. As to quaternary structure, homohexamer.

The protein localises to the cytoplasm. It carries out the reaction UMP + ATP = UDP + ADP. It functions in the pathway pyrimidine metabolism; CTP biosynthesis via de novo pathway; UDP from UMP (UMPK route): step 1/1. Inhibited by UTP. Functionally, catalyzes the reversible phosphorylation of UMP to UDP. The polypeptide is Uridylate kinase (Legionella pneumophila (strain Lens)).